The primary structure comprises 364 residues: Large ribosomal subunit protein uL22m (364 aa).

It belongs to the universal ribosomal protein uL22 family. Component of the mitochondrial large ribosomal subunit (mt-LSU). Mature N.crassa 74S mitochondrial ribosomes consist of a small (37S) and a large (54S) subunit. The 37S small subunit contains a 16S ribosomal RNA (16S mt-rRNA) and 32 different proteins. The 54S large subunit contains a 23S rRNA (23S mt-rRNA) and 42 different proteins. uL22m forms the wall of the exit tunnel.

Its subcellular location is the mitochondrion. Component of the mitochondrial ribosome (mitoribosome), a dedicated translation machinery responsible for the synthesis of mitochondrial genome-encoded proteins, including at least some of the essential transmembrane subunits of the mitochondrial respiratory chain. The mitoribosomes are attached to the mitochondrial inner membrane and translation products are cotranslationally integrated into the membrane. This Neurospora crassa (strain ATCC 24698 / 74-OR23-1A / CBS 708.71 / DSM 1257 / FGSC 987) protein is Large ribosomal subunit protein uL22m (mrpl22).